Here is a 477-residue protein sequence, read N- to C-terminus: Calcium uptake protein 1, mitochondrial (477 aa).

The transit peptide at 1–33 (MFRLNTLSALAELAVGSRWYHGASQPTQTKRRL) directs the protein to the mitochondrion. The segment at 57–107 (AESPPCVNSKKPDTEDKERNKDSGEVSSREGRAADAAAEPYPEDKKKKRSG) is disordered. Positions 66-89 (KKPDTEDKERNKDSGEVSSREGRA) are enriched in basic and acidic residues. Residues 101 to 112 (KKKKRSGFRDRK) form a polybasic region region. S124 bears the Phosphoserine; by PKB mark. Positions 128–131 (KIFR) are k/R-ring. Positions 220 to 255 (TPQRNFEIAFKMFDLNGDGEVDMEEFEQVQSIIRSQ) constitute an EF-hand 1 domain. Ca(2+) is bound by residues D233, N235, D237, E239, and E244. The tract at residues 261–265 (RHRDR) is k/R-ring. Residues 356–376 (KDGKGLTFQEVENFFTFLKNI) form the EF-hand 2; degenerate domain. Positions 410–445 (LSDHVCDVVFALFDCDGNGELSNKEFVSIMKQRLMR) constitute an EF-hand 3 domain. Positions 423, 425, 427, 429, and 434 each coordinate Ca(2+). The residue at position 457 (R457) is an Asymmetric dimethylarginine. The segment at 457–467 (RLMQAMWKCAQ) is C-helix region.

It belongs to the MICU1 family. MICU1 subfamily. As to quaternary structure, heterodimer; disulfide-linked; heterodimerizes with MICU2 or MICU3. Homodimer; disulfide-linked. Component of the uniplex complex, composed of MCU, EMRE/SMDT1, MICU1 and MICU2 (or MICU3) in a 4:4:1:1 stoichiometry. The composition of calcium sensors within the uniplex complex can differ depending on tissues: a MICU1 homodimer can be present instead of the MICU1-MICU2 heterodimer in skeletal-muscle and kidney. MICU1 is recruited to the uniplex complex by EMRE/SMDT1, and it associates with MCU at low calcium levels, occluding the pore of the MCU channel. Associates with the MICOS complex. Interacts with SLC25A23. Interacts with CHCHD4/MIA40; which introduces the interchain disulfide bond with MICU2. Interacts (when methylated) with UCP2; leading to decrease the calcium sensitivity of MICU1. Heterodimer; disulfide-linked; heterodimerizes with MICU2 or MICU3. Heterodimerizes with MICU3 in skeletal muscle. Component of the uniplex complex, composed of MCU, EMRE/SMDT1, MICU1 and MICU2 (or MICU3) in a 4:4:1:1 stoichiometry. Also localizes to mitochondrial cristae junctions. In terms of processing, phosphorylation at Ser-124 by AKT1 impairs its maturation and stability. Post-translationally, asymmetric dimethylation at Arg-457 by PRMT1 decreases the calcium sensitivity of MICU1 by promoting interaction with UCP2. Degraded by YME1L1 when not complexed as homodimer or heterodimer. Not degraded when complexed as homodimer or heterodimer; the presence of the interchain disulfide bond protecting MICU1 from degradation by YME1L1. In terms of tissue distribution, expressed in skeletal muscle, heart, kidney, liver, brain, lung, fat and spleen. As to expression, specifically expressed in the skeletal muscle.

It is found in the mitochondrion intermembrane space. It localises to the mitochondrion inner membrane. In terms of biological role, calcium sensor of the mitochondrial calcium uniporter (MCU) channel, which senses calcium level via its EF-hand domains. MICU1 and MICU2 (or MICU3) form a disulfide-linked heterodimer that stimulates and inhibits MCU activity, depending on the concentration of calcium. At low calcium levels, MICU1 occludes the pore of the MCU channel, preventing mitochondrial calcium uptake. At higher calcium levels, calcium-binding to MICU1 and MICU2 (or MICU3) induces a conformational change that weakens MCU-MICU1 interactions and moves the MICU1-MICU2 heterodimer away from the pore, allowing calcium permeation through the MCU channel. Also required to protect against manganese toxicity by preventing manganese uptake by MCU: mechanistically, manganese-binding to its EF-hand domains does not induce any conformational change, maintaining MCU pore occlusion. Acts as a regulator of mitochondrial cristae structure independently of its ability to regulate the mitochondrial calcium uniporter channel. Regulates glucose-dependent insulin secretion in pancreatic beta-cells by regulating mitochondrial calcium uptake. Induces T-helper 1-mediated autoreactivity, which is accompanied by the release of IFNG. Functionally, isoform that regulates mitochondrial calcium uniporter (MCU) in the skeletal muscle. Compared to other isoforms, this isoform has higher affinity for calcium, promoting mitochondrial calcium uptake at lower calcium concentrations. This allows a rapid response of mitochondrial metabolism and ensures sustained ATP production needed for resistance and strenuous exercise. The polypeptide is Calcium uptake protein 1, mitochondrial (Mus musculus (Mouse)).